We begin with the raw amino-acid sequence, 884 residues long: MTDVTVKSLAAEIQTPVDRLVQQFADAGIKKSDVDSVTQQEKEILLAHLNREHGSVPNKLTLQRKTRSTLNIPSTGGKSKSVQIEVRKKRTYVNTPEAEQAKAEEQAQREAEATAQKIAEEKAKREAEEQAKREAAEKAKRQAAEKEKVTNQQTDEKTKPAQTDKARREAEAAELKRSVEEETRRKVEEDAKRVAEEARKMAAENEGKWPEPVAEQTESADYHVTTSQHARAAEDENDAKVEGDRRSRTRGGKATKQKKGNKLSESKADREEARAVGRKGKRKPSTLQQSFNKPVVAVNRDVVIGETVTVAELANKMAVKGSQVIKAMMKLGAMATINQVIDQETAQLVAEEIGHKVILRRENELEEALMSDRDIGVEAAAEHRAPVVTIMGHVDHGKTSLLDYIRSTKVASGEAGGITQHIGAYHVETENGMITFLDTPGHAAFTSMRARGAQATDIVVLVVAADDGVMPQTIEAIQHAKAANVPVVVAVNKIDKPEADPDRVKTELSQYGIQPEEWGGESQFINVSAKAGIGIDELLNAILLQAEVLELKAVRTGMANGVVIESFLDKGRGPVATVLVQQGTLNKGDIVLCGFEYGRVRAMRDELGRDITSAGPSIPVEILGLSSVPAAGDEVTVVRDEKKAREVALYRQGKFREVKLARQQKSKLENMFANMTEGEVSELNIVIKSDVQGSCEAICDSLEKLSTDEVKVRIVGSGVGGITETDATLAAASGAIILGFNVRADASARRVVETEGLDLRYYSVIYSLIDEVKQAMSGMLAPEYKQQIIGLAEVRDVFKSPKFGAIAGCMVTEGVIKRNNPIRVLRDNVVIYEGELESLRRFKDDVSEVRNGMECGIGVKNYNDVRTGDVIEVFEIIEIKRTIA.

Positions 93-288 are disordered; it reads VNTPEAEQAK…KGKRKPSTLQ (196 aa). The span at 99 to 209 shows a compositional bias: basic and acidic residues; that stretch reads EQAKAEEQAQ…KMAAENEGKW (111 aa). Residues 216–229 are compositionally biased toward polar residues; sequence QTESADYHVTTSQH. Positions 231–246 are enriched in basic and acidic residues; that stretch reads RAAEDENDAKVEGDRR. The span at 247 to 261 shows a compositional bias: basic residues; the sequence is SRTRGGKATKQKKGN. A compositionally biased stretch (basic and acidic residues) spans 262-275; sequence KLSESKADREEARA. Residues 383–552 form the tr-type G domain; sequence HRAPVVTIMG…LLQAEVLELK (170 aa). Positions 392-399 are G1; sequence GHVDHGKT. Residue 392–399 coordinates GTP; the sequence is GHVDHGKT. The segment at 417–421 is G2; it reads GITQH. The segment at 438 to 441 is G3; the sequence is DTPG. GTP-binding positions include 438 to 442 and 492 to 495; these read DTPGH and NKID. The G4 stretch occupies residues 492–495; it reads NKID. The segment at 528–530 is G5; that stretch reads SAK.

This sequence belongs to the TRAFAC class translation factor GTPase superfamily. Classic translation factor GTPase family. IF-2 subfamily.

The protein resides in the cytoplasm. Its function is as follows. One of the essential components for the initiation of protein synthesis. Protects formylmethionyl-tRNA from spontaneous hydrolysis and promotes its binding to the 30S ribosomal subunits. Also involved in the hydrolysis of GTP during the formation of the 70S ribosomal complex. The chain is Translation initiation factor IF-2 from Yersinia pestis bv. Antiqua (strain Angola).